Consider the following 110-residue polypeptide: Insulin (110 aa).

Residues 1 to 24 form the signal peptide; sequence MALWMRLLPLLALLALWGPDPAAA. 3 cysteine pairs are disulfide-bonded: Cys31/Cys96, Cys43/Cys109, and Cys95/Cys100. The propeptide at 57–87 is c peptide; sequence EAEDLQVGQVELGGGPGAGSLQPLALEGSLQ.

This sequence belongs to the insulin family. In terms of assembly, heterodimer of a B chain and an A chain linked by two disulfide bonds.

The protein localises to the secreted. Functionally, insulin decreases blood glucose concentration. It increases cell permeability to monosaccharides, amino acids and fatty acids. It accelerates glycolysis, the pentose phosphate cycle, and glycogen synthesis in liver. The chain is Insulin (INS) from Gorilla gorilla gorilla (Western lowland gorilla).